A 49-amino-acid chain; its full sequence is Soritesidine (49 aa).

It is found in the secreted. In terms of biological role, very potent toxin that exhibits a wide range of toxicities over various organisms and cells including brine shrimp larvae (Artemia salina), sea hare eggs (Aplysia kurodai), mice, and cultured mammalian cells. An SOR-containing fraction cleaves plasmid DNA in a bivalent metal ion dependent manner suggesting genotoxicity of SOR. The polypeptide is Soritesidine (Spongosorites sp. (strain QM G324170) (Okinawan marine Sponge)).